Consider the following 134-residue polypeptide: Aspartate 1-decarboxylase (134 aa).

Serine 25 functions as the Schiff-base intermediate with substrate; via pyruvic acid in the catalytic mechanism. Position 25 is a pyruvic acid (Ser) (serine 25). A substrate-binding site is contributed by threonine 57. The active-site Proton donor is the tyrosine 58. Glycine 73 to alanine 75 is a binding site for substrate.

The protein belongs to the PanD family. As to quaternary structure, heterooctamer of four alpha and four beta subunits. It depends on pyruvate as a cofactor. Is synthesized initially as an inactive proenzyme, which is activated by self-cleavage at a specific serine bond to produce a beta-subunit with a hydroxyl group at its C-terminus and an alpha-subunit with a pyruvoyl group at its N-terminus.

Its subcellular location is the cytoplasm. It catalyses the reaction L-aspartate + H(+) = beta-alanine + CO2. The protein operates within cofactor biosynthesis; (R)-pantothenate biosynthesis; beta-alanine from L-aspartate: step 1/1. Functionally, catalyzes the pyruvoyl-dependent decarboxylation of aspartate to produce beta-alanine. The protein is Aspartate 1-decarboxylase of Sulfurihydrogenibium sp. (strain YO3AOP1).